Reading from the N-terminus, the 236-residue chain is 2-C-methyl-D-erythritol 4-phosphate cytidylyltransferase (236 aa).

Belongs to the IspD/TarI cytidylyltransferase family. IspD subfamily.

It catalyses the reaction 2-C-methyl-D-erythritol 4-phosphate + CTP + H(+) = 4-CDP-2-C-methyl-D-erythritol + diphosphate. The protein operates within isoprenoid biosynthesis; isopentenyl diphosphate biosynthesis via DXP pathway; isopentenyl diphosphate from 1-deoxy-D-xylulose 5-phosphate: step 2/6. Its function is as follows. Catalyzes the formation of 4-diphosphocytidyl-2-C-methyl-D-erythritol from CTP and 2-C-methyl-D-erythritol 4-phosphate (MEP). In Burkholderia pseudomallei (strain 1106a), this protein is 2-C-methyl-D-erythritol 4-phosphate cytidylyltransferase.